The chain runs to 275 residues: 3-methyl-2-oxobutanoate hydroxymethyltransferase (275 aa).

D49 and D88 together coordinate Mg(2+). Residues 49–50 (DS), D88, and K118 contribute to the 3-methyl-2-oxobutanoate site. Mg(2+) is bound at residue E120. The active-site Proton acceptor is E187.

This sequence belongs to the PanB family. Homodecamer; pentamer of dimers. Mg(2+) is required as a cofactor.

The protein resides in the cytoplasm. The catalysed reaction is 3-methyl-2-oxobutanoate + (6R)-5,10-methylene-5,6,7,8-tetrahydrofolate + H2O = 2-dehydropantoate + (6S)-5,6,7,8-tetrahydrofolate. Its pathway is cofactor biosynthesis; (R)-pantothenate biosynthesis; (R)-pantoate from 3-methyl-2-oxobutanoate: step 1/2. Functionally, catalyzes the reversible reaction in which hydroxymethyl group from 5,10-methylenetetrahydrofolate is transferred onto alpha-ketoisovalerate to form ketopantoate. This Bartonella quintana (strain Toulouse) (Rochalimaea quintana) protein is 3-methyl-2-oxobutanoate hydroxymethyltransferase.